Reading from the N-terminus, the 378-residue chain is Chaperone protein DnaJ (378 aa).

Residues 6 to 70 (DYYDVLGVSR…QKRQQYDQFG (65 aa)) enclose the J domain. The CR-type zinc-finger motif lies at 137-219 (GKTSEISYSR…CHGKGVKTQK (83 aa)). Zn(2+) contacts are provided by cysteine 150, cysteine 153, cysteine 167, cysteine 170, cysteine 193, cysteine 196, cysteine 207, and cysteine 210. CXXCXGXG motif repeat units follow at residues 150-157 (CEVCKGSG), 167-174 (CDKCGGSG), 193-200 (CDKCAGSG), and 207-214 (CHNCHGKG).

The protein belongs to the DnaJ family. Homodimer. Zn(2+) is required as a cofactor.

It is found in the cytoplasm. In terms of biological role, participates actively in the response to hyperosmotic and heat shock by preventing the aggregation of stress-denatured proteins and by disaggregating proteins, also in an autonomous, DnaK-independent fashion. Unfolded proteins bind initially to DnaJ; upon interaction with the DnaJ-bound protein, DnaK hydrolyzes its bound ATP, resulting in the formation of a stable complex. GrpE releases ADP from DnaK; ATP binding to DnaK triggers the release of the substrate protein, thus completing the reaction cycle. Several rounds of ATP-dependent interactions between DnaJ, DnaK and GrpE are required for fully efficient folding. Also involved, together with DnaK and GrpE, in the DNA replication of plasmids through activation of initiation proteins. In Lactobacillus delbrueckii subsp. bulgaricus (strain ATCC BAA-365 / Lb-18), this protein is Chaperone protein DnaJ.